The following is a 136-amino-acid chain: ATP synthase F(0) complex subunit C1, mitochondrial (136 aa).

The N-terminal 61 residues, 1 to 61, are a transit peptide targeting the mitochondrion; the sequence is MQTTGALLIS…REFQTSVVSR (61 aa). A helical transmembrane segment spans residues 77–97; sequence VGVAGSGAGIGTVFGSLIIGY. An N6,N6,N6-trimethyllysine modification is found at Lys104. The helical transmembrane segment at 112–132 threads the bilayer; the sequence is ILGFALFEAMGLFCLMVAFLI.

The protein belongs to the ATPase C chain family. In terms of assembly, homooctamer; the c-ring consists of eight c subunits forming a circle, and each subunit adopts a hairpin shape. Component of the ATP synthase complex composed at least of ATP5F1A/subunit alpha, ATP5F1B/subunit beta, ATP5MC1/subunit c (homooctomer), MT-ATP6/subunit a, MT-ATP8/subunit 8, ATP5ME/subunit e, ATP5MF/subunit f, ATP5MG/subunit g, ATP5MK/subunit k, ATP5MJ/subunit j, ATP5F1C/subunit gamma, ATP5F1D/subunit delta, ATP5F1E/subunit epsilon, ATP5PF/subunit F6, ATP5PB/subunit b, ATP5PD/subunit d, ATP5PO/subunit OSCP. ATP synthase complex consists of a soluble F(1) head domain (subunits alpha(3) and beta(3)) - the catalytic core - and a membrane F(0) domain - the membrane proton channel (subunits c, a, 8, e, f, g, k and j). These two domains are linked by a central stalk (subunits gamma, delta, and epsilon) rotating inside the F1 region and a stationary peripheral stalk (subunits F6, b, d, and OSCP). Interacts with TMEM70 (homooligomer form); this interaction facilitates the oligomer formation of subunit c/ATP5MC1 (c-ring) and the c-ring membrane insertion and also protects ATP5MC1 against intramitochondrial proteolysis. Post-translationally, trimethylated by ATPSCKMT at Lys-104. Methylation is required for proper incorporation of the C subunit into the ATP synthase complex and mitochondrial respiration.

The protein localises to the mitochondrion membrane. The catalysed reaction is H(+)(in) = H(+)(out). In terms of biological role, subunit c, of the mitochondrial membrane ATP synthase complex (F(1)F(0) ATP synthase or Complex V) that produces ATP from ADP in the presence of a proton gradient across the membrane which is generated by electron transport complexes of the respiratory chain. ATP synthase complex consist of a soluble F(1) head domain - the catalytic core - and a membrane F(1) domain - the membrane proton channel. These two domains are linked by a central stalk rotating inside the F(1) region and a stationary peripheral stalk. During catalysis, ATP synthesis in the catalytic domain of F(1) is coupled via a rotary mechanism of the central stalk subunits to proton translocation. With the subunit a (MT-ATP6), forms the proton-conducting channel in the F(0) domain, that contains two crucial half-channels (inlet and outlet) that facilitate proton movement from the mitochondrial intermembrane space (IMS) into the matrix. Protons are taken up via the inlet half-channel and released through the outlet half-channel, following a Grotthuss mechanism. This Sus scrofa (Pig) protein is ATP synthase F(0) complex subunit C1, mitochondrial.